The chain runs to 126 residues: Large ribosomal subunit protein bL17 (126 aa).

This sequence belongs to the bacterial ribosomal protein bL17 family. Part of the 50S ribosomal subunit. Contacts protein L32.

The protein is Large ribosomal subunit protein bL17 of Vibrio parahaemolyticus serotype O3:K6 (strain RIMD 2210633).